The following is a 487-amino-acid chain: MTHLPKLAIVGRPNVGKSALFNRICKQKIAIVDEAEGITRDRLYAEGELFGLHFQVIDTGGINARSKEVFNEEIKRQAEIAIEEADTIVQVVDAHVGLTELDKEVARVLLRTKKPVCLAVNKIDNLSQTSLMHQFHSLGIKQMIPVSAAQGWQIAELLETAFEKISREIESQETFSSIKVAIVGRANVGKSSLVNYLLDEDRCIVSPIPGTTRDSVDISFTHKDECYTLIDTAGIRRKRAEHEVVDKFAAIRTERAIERADLCVLMLDVQEGITAQDKKIANTIEEAGQGCIILLNKWDLVQGFRMEHCLQNLEEEVPFLRHCPKIFTSAKTGRNIDKLFPLIQEVYANSQKRITTHQLNKFIGEALQKNHPPMIQGKRLRIYYMAQVAVKPPKFILFVNYPNLMTDTYKKYLYNQFREAYAFTGVPILIHLKGKTKKDKPVSSLSLTRKQTKSTDQENNEYDELYQEQRVSDEDYYFENEEDLTEK.

2 consecutive EngA-type G domains span residues 5–169 (PKLA…SREI) and 178–351 (IKVA…ANSQ). GTP-binding positions include 11–18 (GRPNVGKS), 58–62 (DTGGI), 121–124 (NKID), 184–191 (GRANVGKS), 231–235 (DTAGI), and 296–299 (NKWD). Residues 352 to 439 (KRITTHQLNK…IHLKGKTKKD (88 aa)) enclose the KH-like domain. Residues 441 to 466 (PVSSLSLTRKQTKSTDQENNEYDELY) are disordered.

It belongs to the TRAFAC class TrmE-Era-EngA-EngB-Septin-like GTPase superfamily. EngA (Der) GTPase family. As to quaternary structure, associates with the 50S ribosomal subunit.

In terms of biological role, GTPase that plays an essential role in the late steps of ribosome biogenesis. In Protochlamydia amoebophila (strain UWE25), this protein is GTPase Der.